The primary structure comprises 185 residues: Transcription factor bHLH109 (185 aa).

The 51-residue stretch at 67–117 folds into the bHLH domain; that stretch reads RSMEYRMMMEKKRRKEIKDKVDILQGLMPNHCTKPDLASKLENIIEYIKSL.

Belongs to the bHLH protein family. In terms of assembly, homodimer.

The protein localises to the nucleus. Functionally, transcription factor involved in somatic embryogenesis. Acts as a positive regulator of somatic embryo formation. Acts as a positive regulator of ECP63 by targeting its promoter and inducing its expression. The chain is Transcription factor bHLH109 (BHLH109) from Arabidopsis thaliana (Mouse-ear cress).